A 251-amino-acid chain; its full sequence is Uridylate kinase (251 aa).

11 to 14 (KLSG) is an ATP binding site. Residues 19–24 (GNQGFG) form an involved in allosteric activation by GTP region. Glycine 53 contributes to the UMP binding site. ATP-binding residues include glycine 54 and arginine 58. Residues aspartate 73 and 134 to 141 (TGNPYFTT) each bind UMP. 3 residues coordinate ATP: threonine 161, tyrosine 167, and aspartate 170.

The protein belongs to the UMP kinase family. As to quaternary structure, homohexamer.

The protein localises to the cytoplasm. It carries out the reaction UMP + ATP = UDP + ADP. It functions in the pathway pyrimidine metabolism; CTP biosynthesis via de novo pathway; UDP from UMP (UMPK route): step 1/1. With respect to regulation, allosterically activated by GTP. Inhibited by UTP. Its function is as follows. Catalyzes the reversible phosphorylation of UMP to UDP. The sequence is that of Uridylate kinase from Protochlamydia amoebophila (strain UWE25).